The sequence spans 240 residues: RNA transcription, translation and transport factor protein (240 aa).

Belongs to the RTRAF family. Homodimer. Component of a tRNA-splicing ligase complex.

Its subcellular location is the nucleus. It is found in the cytoplasm. The protein resides in the cytosol. The protein localises to the perinuclear region. It localises to the cytoskeleton. Its subcellular location is the microtubule organizing center. It is found in the centrosome. Functionally, RNA-binding protein involved in modulation of mRNA transcription by Polymerase II. Component of the tRNA-splicing ligase complex. This Xenopus laevis (African clawed frog) protein is RNA transcription, translation and transport factor protein.